A 552-amino-acid chain; its full sequence is Putative E3 ubiquitin-protein ligase ARI6 (552 aa).

A TRIAD supradomain region spans residues 129 to 343 (REFTCGICFE…GGYYACNRYE (215 aa)). Residues Cys-133, Cys-136, Cys-150, His-152, Cys-155, Cys-158, Cys-178, Cys-183, Cys-222, Cys-227, Cys-245, Cys-247, Cys-252, Cys-255, His-260, Cys-265, Cys-292, and Cys-295 each coordinate Zn(2+). An RING-type 1 zinc finger spans residues 133-183 (CGICFESYPLEETISVSCGHPFCATCWTGYISTSINDGPGCLMLKCPYPCC). Residues 202–265 (ERYYRYFLRS…SEEAHRPVDC (64 aa)) form an IBR-type zinc finger. The segment at 292 to 322 (CPKCKRPIEKNHGCMHMTCTPPCKFEFCWLC) adopts an RING-type 2; atypical zinc-finger fold. The active site involves Cys-305. Residues Cys-310, Cys-314, Cys-319, Cys-322, His-329, and Cys-339 each contribute to the Zn(2+) site. Positions 518–552 (HAASSKPANCKPSSNTKDGGKGKKEALTMAGSAET) are disordered. Over residues 519–534 (AASSKPANCKPSSNTK) the composition is skewed to polar residues.

Belongs to the RBR family. Ariadne subfamily. Requires Zn(2+) as cofactor.

The catalysed reaction is [E2 ubiquitin-conjugating enzyme]-S-ubiquitinyl-L-cysteine + [acceptor protein]-L-lysine = [E2 ubiquitin-conjugating enzyme]-L-cysteine + [acceptor protein]-N(6)-ubiquitinyl-L-lysine.. Its pathway is protein modification; protein ubiquitination. In terms of biological role, might act as an E3 ubiquitin-protein ligase, or as part of E3 complex, which accepts ubiquitin from specific E2 ubiquitin-conjugating enzymes and then transfers it to substrates. This chain is Putative E3 ubiquitin-protein ligase ARI6 (ARI6), found in Arabidopsis thaliana (Mouse-ear cress).